Here is an 84-residue protein sequence, read N- to C-terminus: Magnetosome protein MamR (84 aa).

This sequence belongs to the magnetosome MamR family.

The protein localises to the magnetosome. Its function is as follows. May play a role in controlling magnetite number and size but not in control of magnetite morphology. This chain is Magnetosome protein MamR, found in Paramagnetospirillum magneticum (strain ATCC 700264 / AMB-1) (Magnetospirillum magneticum).